We begin with the raw amino-acid sequence, 133 residues long: Small ribosomal subunit protein uS8 (133 aa).

The protein belongs to the universal ribosomal protein uS8 family. Part of the 30S ribosomal subunit. Contacts proteins S5 and S12.

In terms of biological role, one of the primary rRNA binding proteins, it binds directly to 16S rRNA central domain where it helps coordinate assembly of the platform of the 30S subunit. This is Small ribosomal subunit protein uS8 from Trichodesmium erythraeum (strain IMS101).